The primary structure comprises 272 residues: NADPH-dependent aldehyde reductase 2, chloroplastic (272 aa).

Residues 1–53 (MAAASSVSSPPLCLAGRVAIVTGSSRGIGRAIAIHLAELGARVVVNYSTSPVE) constitute a chloroplast transit peptide. Position 26-50 (26-50 (RGIGRAIAIHLAELGARVVVNYSTS)) interacts with NADP(+). Residue serine 165 participates in substrate binding. Catalysis depends on tyrosine 179, which acts as the Proton acceptor.

Belongs to the short-chain dehydrogenases/reductases (SDR) family.

Its subcellular location is the plastid. It localises to the chloroplast. Functionally, aldehyde reductase that catalyzes the reduction of the aldehyde carbonyl groups on saturated and alpha,beta-unsaturated aldehydes with more than 5 carbons. No activity on alpha,beta-unsaturated ketones. Can use propionaldehyde, butyraldehyde, methylglyoxal, (e)-2-pentenal, (E)-2-hexenal, (Z)-3-hexenal and (E)-2-nonenal as substrates, but not propenal (acrolein), crotonaldehyde, 2-butanone, 3-buten-2-one or 1-penten-3-one. This is NADPH-dependent aldehyde reductase 2, chloroplastic from Arabidopsis thaliana (Mouse-ear cress).